Here is a 792-residue protein sequence, read N- to C-terminus: RNA-binding protein RRM4 (792 aa).

The interval 37–60 (TDSTAQASHAAEQTIDAHQQAGDV) is disordered. RRM domains follow at residues 72–145 (PLLY…QDAS), 154–235 (KPRL…IDTA), and 321–398 (CNLF…LHEP). The segment covering 412-424 (AANADNSDMSSNS) has biased composition (low complexity). Disordered regions lie at residues 412–438 (AANADNSDMSSNSPPTEARKADKRQSR) and 630–649 (DESGEDLSPPRASSGSAPVP). Positions 640–649 (RASSGSAPVP) are enriched in polar residues. Positions 715 to 792 (ATDDFIDSLQ…QHKVAAGLNK (78 aa)) constitute a PABC domain.

The protein belongs to the polyadenylate-binding protein type-1 family. As to quaternary structure, part of large ribonucleoprotein complexes (mRNPs) containing RNA-binding proteins RRM4 and PAB1, endosome-binding protein UPA1, core scaffold protein UPA2 and associated factor GRP1. Interacts (via PABC domain) with UPA1 (via PAM2 domain).

It localises to the cytoplasm. The protein localises to the cytoskeleton. It is found in the endosome. Its function is as follows. Key RNA-binding protein involved in the formation of polar-growing hyphae which is essential for infection by the plant pathogen. During filamentation, assembles into particles that shuttle bidirectionally along microtubules to both poles. The RRM4 transport particles are part of the endosomal mRNP transport that regulates polarity of the infectious hyphae by transporting distinct mRNAs encoding, for example, the ubiquitin fusion protein UBI1, the small G protein RHO3, or the septin CDC3, from the nucleus to cell poles. Recognizes a broad spectrum of cargo mRNAs and precisely binds at stop codons, which constitute landmark sites of translation, suggesting an intimate connection of mRNA transport and translation. Also binds to the specific binding motif UAUG of cargo mRNAs via its third RRM. Plus-end-directed KIN3, a kinesin-3 type motor, mediates anterograde transport of RRM4-containing mRNPs whereas split dynein DYM1-DYN2 functions in retrograde movement of mRNPs. This is RNA-binding protein RRM4 from Mycosarcoma maydis (Corn smut fungus).